The primary structure comprises 561 residues: Dihydroxy-acid dehydratase (561 aa).

[2Fe-2S] cluster is bound at residue Cys51. Asp83 is a binding site for Mg(2+). Cys124 is a binding site for [2Fe-2S] cluster. 2 residues coordinate Mg(2+): Asp125 and Lys126. Position 126 is an N6-carboxylysine (Lys126). Cys196 provides a ligand contact to [2Fe-2S] cluster. Glu448 is a Mg(2+) binding site. Ser473 (proton acceptor) is an active-site residue.

Belongs to the IlvD/Edd family. In terms of assembly, homodimer. [2Fe-2S] cluster is required as a cofactor. The cofactor is Mg(2+).

It catalyses the reaction (2R)-2,3-dihydroxy-3-methylbutanoate = 3-methyl-2-oxobutanoate + H2O. The enzyme catalyses (2R,3R)-2,3-dihydroxy-3-methylpentanoate = (S)-3-methyl-2-oxopentanoate + H2O. It functions in the pathway amino-acid biosynthesis; L-isoleucine biosynthesis; L-isoleucine from 2-oxobutanoate: step 3/4. It participates in amino-acid biosynthesis; L-valine biosynthesis; L-valine from pyruvate: step 3/4. Its function is as follows. Functions in the biosynthesis of branched-chain amino acids. Catalyzes the dehydration of (2R,3R)-2,3-dihydroxy-3-methylpentanoate (2,3-dihydroxy-3-methylvalerate) into 2-oxo-3-methylpentanoate (2-oxo-3-methylvalerate) and of (2R)-2,3-dihydroxy-3-methylbutanoate (2,3-dihydroxyisovalerate) into 2-oxo-3-methylbutanoate (2-oxoisovalerate), the penultimate precursor to L-isoleucine and L-valine, respectively. This Sulfolobus acidocaldarius (strain ATCC 33909 / DSM 639 / JCM 8929 / NBRC 15157 / NCIMB 11770) protein is Dihydroxy-acid dehydratase.